The chain runs to 377 residues: Floricaula/leafy homolog (377 aa).

Basic and acidic residues predominate over residues 116-126 (RRRLDEEDPRR). The segment at 116 to 190 (RRRLDEEDPR…RKKGQRKVVD (75 aa)) is disordered. A compositionally biased stretch (polar residues) spans 131-141 (SGDNNTNTLDA). DNA-binding regions lie at residues 206–210 (REHPF), 275–282 (NKPKMRHY), and 346–349 (YVPT).

The protein belongs to the FLO/LFY family. As to expression, in developing inflorescences, leaf primordia and very young leaves.

It is found in the nucleus. In terms of biological role, probable transcription factor. The chain is Floricaula/leafy homolog (FL) from Populus trichocarpa (Western balsam poplar).